The chain runs to 391 residues: S-adenosylmethionine synthase (391 aa).

His19 lines the ATP pocket. Asp21 is a Mg(2+) binding site. Glu47 is a binding site for K(+). Positions 60 and 103 each coordinate L-methionine. A flexible loop region spans residues 103-113; sequence QSADIAQGVDR. ATP contacts are provided by residues 168–170, 236–237, Asp245, 251–252, Ala268, and Lys272; these read DGK, RF, and RK. Position 245 (Asp245) interacts with L-methionine. An L-methionine-binding site is contributed by Lys276.

Belongs to the AdoMet synthase family. As to quaternary structure, homotetramer; dimer of dimers. Requires Mg(2+) as cofactor. The cofactor is K(+).

The protein resides in the cytoplasm. It carries out the reaction L-methionine + ATP + H2O = S-adenosyl-L-methionine + phosphate + diphosphate. The protein operates within amino-acid biosynthesis; S-adenosyl-L-methionine biosynthesis; S-adenosyl-L-methionine from L-methionine: step 1/1. Functionally, catalyzes the formation of S-adenosylmethionine (AdoMet) from methionine and ATP. The overall synthetic reaction is composed of two sequential steps, AdoMet formation and the subsequent tripolyphosphate hydrolysis which occurs prior to release of AdoMet from the enzyme. This chain is S-adenosylmethionine synthase, found in Nitratidesulfovibrio vulgaris (strain ATCC 29579 / DSM 644 / CCUG 34227 / NCIMB 8303 / VKM B-1760 / Hildenborough) (Desulfovibrio vulgaris).